The chain runs to 419 residues: uncharacterized protein (419 aa).

The 208-residue stretch at 29-236 folds into the Obg domain; sequence PKFQDKIRIR…KLIELELKTI (208 aa). Residues 237 to 414 enclose the OBG-type G domain; it reads CEIGLVGLPN…LVRGMTQLLQ (178 aa). GTP contacts are provided by residues 243–250, 295–299, and 364–367; these read GLPNAGKS, DIPGI, and ANKA.

Belongs to the TRAFAC class OBG-HflX-like GTPase superfamily. OBG GTPase family.

The protein localises to the mitochondrion. This is an uncharacterized protein from Schizosaccharomyces pombe (strain 972 / ATCC 24843) (Fission yeast).